Consider the following 596-residue polypeptide: Meiosis-specific protein ASY1 (596 aa).

An HORMA domain is found at 15–228 (QDSLLLTRNL…SKHLVLTLKV (214 aa)). The disordered stretch occupies residues 235–303 (CEDENDDMQD…NTQDPAENEQ (69 aa)). Positions 282-295 (QDDDDGEVDEDDNT) are enriched in acidic residues. Positions 351-449 (SKTGKDMYIK…ASSNRRLGKR (99 aa)) constitute an SWIRM domain. The interval 562-596 (TVNCSQASQDRRGRKTSMVREPILQYSKRQKSQAN) is disordered.

In terms of assembly, interacts with ASY3.

It localises to the chromosome. It is found in the nucleus. Its function is as follows. Required for normal meiosis in male and female gametophytes. Plays a crucial role in coordinating the activity of DMC1, a key member of the homologous recombination machinery. Acts at the interface between the developing chromosome axes and the recombination machinery to ensure DMC1-mediated interhomolog recombination. The protein is Meiosis-specific protein ASY1 of Arabidopsis thaliana (Mouse-ear cress).